Here is a 328-residue protein sequence, read N- to C-terminus: Sphingolipid delta(4)-desaturase DES1-like (328 aa).

The next 3 membrane-spanning stretches (helical) occupy residues 50–70 (PLAFLKIAAVVSLQLWTATLL), 78–98 (ILTVAYFFGSFLNHNLFLAIH), and 114–134 (WLGIFANLPIGVPMSITFQKY). The short motif at 98 to 102 (HELSH) is the Histidine box-1 element. The Histidine box-2 motif lies at 135 to 139 (HLEHH). The next 3 helical transmembrane spans lie at 164-184 (LSKSVWVVFQLFFYALRPLFL), 192-212 (WEFTNLIIQIALDASMVYFFG), and 217-237 (AYLILSTFVGGGMHPMAGHFI). The short motif at 266-270 (HNEHH) is the Histidine box-3 element.

It belongs to the fatty acid desaturase type 1 family. DEGS subfamily.

It is found in the endoplasmic reticulum membrane. The catalysed reaction is an N-acylsphinganine + 2 Fe(II)-[cytochrome b5] + O2 + 2 H(+) = an N-acylsphing-4-enine + 2 Fe(III)-[cytochrome b5] + 2 H2O. In terms of biological role, sphingolipid-delta-4-desaturase required for the biosynthesis of delta-4-unsaturated sphingolipids and derivatives. The protein is Sphingolipid delta(4)-desaturase DES1-like of Oryza sativa subsp. japonica (Rice).